The chain runs to 183 residues: ATP-dependent protease subunit HslV (183 aa).

Threonine 7 is an active-site residue. Residues glycine 162, cysteine 165, and threonine 168 each coordinate Na(+).

The protein belongs to the peptidase T1B family. HslV subfamily. A double ring-shaped homohexamer of HslV is capped on each side by a ring-shaped HslU homohexamer. The assembly of the HslU/HslV complex is dependent on binding of ATP.

It is found in the cytoplasm. It catalyses the reaction ATP-dependent cleavage of peptide bonds with broad specificity.. With respect to regulation, allosterically activated by HslU binding. Its function is as follows. Protease subunit of a proteasome-like degradation complex believed to be a general protein degrading machinery. This Chromobacterium violaceum (strain ATCC 12472 / DSM 30191 / JCM 1249 / CCUG 213 / NBRC 12614 / NCIMB 9131 / NCTC 9757 / MK) protein is ATP-dependent protease subunit HslV.